Consider the following 430-residue polypeptide: Adenylosuccinate synthetase (430 aa).

GTP is bound by residues 12–18 (GDEGKGK) and 40–42 (GHT). The active-site Proton acceptor is aspartate 13. Aspartate 13 and glycine 40 together coordinate Mg(2+). IMP contacts are provided by residues 13–16 (DEGK), 38–41 (NAGH), threonine 128, arginine 142, glutamine 223, threonine 238, and arginine 302. Catalysis depends on histidine 41, which acts as the Proton donor. 298 to 304 (TTTGRPR) provides a ligand contact to substrate. GTP contacts are provided by residues arginine 304, 330–332 (LLD), and 412–414 (SVG).

It belongs to the adenylosuccinate synthetase family. As to quaternary structure, homodimer. The cofactor is Mg(2+).

It is found in the cytoplasm. The enzyme catalyses IMP + L-aspartate + GTP = N(6)-(1,2-dicarboxyethyl)-AMP + GDP + phosphate + 2 H(+). It participates in purine metabolism; AMP biosynthesis via de novo pathway; AMP from IMP: step 1/2. Plays an important role in the de novo pathway of purine nucleotide biosynthesis. Catalyzes the first committed step in the biosynthesis of AMP from IMP. The chain is Adenylosuccinate synthetase from Listeria welshimeri serovar 6b (strain ATCC 35897 / DSM 20650 / CCUG 15529 / CIP 8149 / NCTC 11857 / SLCC 5334 / V8).